The sequence spans 411 residues: GTPase Obg (411 aa).

The Obg domain maps to 1-157; that stretch reads MQFIDEARFV…REIRLELRVL (157 aa). Residues 20 to 45 are disordered; it reads AVSFHREKYRPRGGPDGGRGGDGGSV. Gly residues predominate over residues 33–43; sequence GPDGGRGGDGG. Residues 158 to 330 enclose the OBG-type G domain; sequence SDVGLVGLPN…LERSAEAAPR (173 aa). GTP contacts are provided by residues 164–171, 189–193, 212–215, 276–279, and 311–313; these read GLPNAGKS, FTTLT, DIPG, NKVD, and ARL. Mg(2+) contacts are provided by Ser-171 and Thr-191. The OCT domain occupies 335 to 411; the sequence is VFRPSWRGLR…RIGDVSFEFR (77 aa).

It belongs to the TRAFAC class OBG-HflX-like GTPase superfamily. OBG GTPase family. Monomer. Mg(2+) is required as a cofactor.

It localises to the cytoplasm. In terms of biological role, an essential GTPase which binds GTP, GDP and possibly (p)ppGpp with moderate affinity, with high nucleotide exchange rates and a fairly low GTP hydrolysis rate. Plays a role in control of the cell cycle, stress response, ribosome biogenesis and in those bacteria that undergo differentiation, in morphogenesis control. This Rubrobacter xylanophilus (strain DSM 9941 / JCM 11954 / NBRC 16129 / PRD-1) protein is GTPase Obg.